The following is a 278-amino-acid chain: Large ribosomal subunit protein uL2 (278 aa).

2 disordered regions span residues 1 to 53 (MAIR…TTRH) and 224 to 278 (VVMN…NKKR). Residues 23–33 (EITRSTPEKSL) show a composition bias toward basic and acidic residues. Polar residues predominate over residues 258–267 (RNPNRYSNNM). Positions 269 to 278 (VRRRRPNKKR) are enriched in basic residues.

The protein belongs to the universal ribosomal protein uL2 family. Part of the 50S ribosomal subunit. Forms a bridge to the 30S subunit in the 70S ribosome.

In terms of biological role, one of the primary rRNA binding proteins. Required for association of the 30S and 50S subunits to form the 70S ribosome, for tRNA binding and peptide bond formation. It has been suggested to have peptidyltransferase activity; this is somewhat controversial. Makes several contacts with the 16S rRNA in the 70S ribosome. The sequence is that of Large ribosomal subunit protein uL2 from Corynebacterium aurimucosum (strain ATCC 700975 / DSM 44827 / CIP 107346 / CN-1) (Corynebacterium nigricans).